The sequence spans 592 residues: Arginine--tRNA ligase (592 aa).

The 'HIGH' region motif lies at 123–133 (PNTNKPLHLGH).

The protein belongs to the class-I aminoacyl-tRNA synthetase family. In terms of assembly, monomer.

Its subcellular location is the cytoplasm. The catalysed reaction is tRNA(Arg) + L-arginine + ATP = L-arginyl-tRNA(Arg) + AMP + diphosphate. The chain is Arginine--tRNA ligase from Flavobacterium johnsoniae (strain ATCC 17061 / DSM 2064 / JCM 8514 / BCRC 14874 / CCUG 350202 / NBRC 14942 / NCIMB 11054 / UW101) (Cytophaga johnsonae).